The sequence spans 192 residues: MKNKVVVVTGVPGVGGTTLTQKTIEKLKEEGIEYKMVNFGTVMFEVAKEEGLVEDRDQMRKLDPDTQKRIQKLAGRKIAEMAKESNVIVDTHSTVKTPKGYLAGLPIWVLEELNPDIIVIVETSSDEILMRRLGDATRNRDIELTSDIDEHQFMNRCAAMAYGVLTGATVKIIKNRDGLLDKAVEELISVLK.

10 to 18 contributes to the ATP binding site; it reads GVPGVGGTT.

This sequence belongs to the archaeal adenylate kinase family. As to quaternary structure, monomer.

The protein resides in the cytoplasm. It catalyses the reaction AMP + ATP = 2 ADP. In Methanotorris igneus (Methanococcus igneus), this protein is Adenylate kinase (adkA).